Consider the following 182-residue polypeptide: Ribosome-recycling factor (182 aa).

It belongs to the RRF family.

It is found in the cytoplasm. In terms of biological role, responsible for the release of ribosomes from messenger RNA at the termination of protein biosynthesis. May increase the efficiency of translation by recycling ribosomes from one round of translation to another. The chain is Ribosome-recycling factor from Prochlorococcus marinus (strain AS9601).